The chain runs to 208 residues: Holliday junction resolvase RecU (208 aa).

A disordered region spans residues 1–25 (MNYPNGKPFNRNKTKVGRTNDHKSS). The Mg(2+) site is built by T87, D89, E102, and Q121.

The protein belongs to the RecU family. The cofactor is Mg(2+).

It is found in the cytoplasm. The catalysed reaction is Endonucleolytic cleavage at a junction such as a reciprocal single-stranded crossover between two homologous DNA duplexes (Holliday junction).. Its function is as follows. Endonuclease that resolves Holliday junction intermediates in genetic recombination. Cleaves mobile four-strand junctions by introducing symmetrical nicks in paired strands. Promotes annealing of linear ssDNA with homologous dsDNA. Required for DNA repair, homologous recombination and chromosome segregation. In Staphylococcus carnosus (strain TM300), this protein is Holliday junction resolvase RecU.